Reading from the N-terminus, the 186-residue chain is Peptide deformylase (186 aa).

Residues cysteine 99 and histidine 141 each contribute to the Fe cation site. Glutamate 142 is an active-site residue. Histidine 145 is a Fe cation binding site.

Belongs to the polypeptide deformylase family. Fe(2+) is required as a cofactor.

It catalyses the reaction N-terminal N-formyl-L-methionyl-[peptide] + H2O = N-terminal L-methionyl-[peptide] + formate. Its function is as follows. Removes the formyl group from the N-terminal Met of newly synthesized proteins. Requires at least a dipeptide for an efficient rate of reaction. N-terminal L-methionine is a prerequisite for activity but the enzyme has broad specificity at other positions. This Chlamydia felis (strain Fe/C-56) (Chlamydophila felis) protein is Peptide deformylase.